Reading from the N-terminus, the 363-residue chain is 3-isopropylmalate dehydrogenase A (363 aa).

78–89 contacts NAD(+); it reads GPKWGTGAVRPE. Residues arginine 96, arginine 106, arginine 135, and aspartate 222 each contribute to the substrate site. Mg(2+)-binding residues include aspartate 222, aspartate 247, and aspartate 251. 287–299 is a binding site for NAD(+); that stretch reads GSAPDIAGKGIVN.

Belongs to the isocitrate and isopropylmalate dehydrogenases family. Homodimer. Mg(2+) serves as cofactor. Requires Mn(2+) as cofactor.

It is found in the cytoplasm. The enzyme catalyses (2R,3S)-3-isopropylmalate + NAD(+) = 4-methyl-2-oxopentanoate + CO2 + NADH. The protein operates within amino-acid biosynthesis; L-leucine biosynthesis; L-leucine from 3-methyl-2-oxobutanoate: step 3/4. Its function is as follows. Catalyzes the oxidation of 3-carboxy-2-hydroxy-4-methylpentanoate (3-isopropylmalate) to 3-carboxy-4-methyl-2-oxopentanoate. The product decarboxylates to 4-methyl-2 oxopentanoate. The protein is 3-isopropylmalate dehydrogenase A (leu2A) of Aspergillus niger.